The chain runs to 126 residues: Fluoride-specific ion channel FluC (126 aa).

The next 4 membrane-spanning stretches (helical) occupy residues 6–26, 36–56, 68–88, and 99–119; these read FVAV…FAVL, YGTL…VGFF, LLAV…SSEV, and IGML…MLGL. Na(+) is bound by residues G76 and T79.

Belongs to the fluoride channel Fluc/FEX (TC 1.A.43) family.

It localises to the cell inner membrane. It catalyses the reaction fluoride(in) = fluoride(out). Its activity is regulated as follows. Na(+) is not transported, but it plays an essential structural role and its presence is essential for fluoride channel function. Fluoride-specific ion channel. Important for reducing fluoride concentration in the cell, thus reducing its toxicity. This Ralstonia nicotianae (strain ATCC BAA-1114 / GMI1000) (Ralstonia solanacearum) protein is Fluoride-specific ion channel FluC.